We begin with the raw amino-acid sequence, 67 residues long: Large ribosomal subunit protein bL35 (67 aa).

The protein belongs to the bacterial ribosomal protein bL35 family.

In Bartonella quintana (strain Toulouse) (Rochalimaea quintana), this protein is Large ribosomal subunit protein bL35.